The following is a 132-amino-acid chain: Small ribosomal subunit protein eS24 (132 aa).

The tract at residues L91 to N132 is disordered. Residues L96–N112 show a composition bias toward basic and acidic residues.

This sequence belongs to the eukaryotic ribosomal protein eS24 family. In terms of assembly, component of the small ribosomal subunit.

The protein localises to the cytoplasm. Its function is as follows. Component of the small ribosomal subunit. The ribosome is a large ribonucleoprotein complex responsible for the synthesis of proteins in the cell. Required for processing of pre-rRNA and maturation of 40S ribosomal subunits. The polypeptide is Small ribosomal subunit protein eS24 (rps24) (Oryzias latipes (Japanese rice fish)).